The chain runs to 406 residues: Cyclin-dependent kinase 4 homolog (406 aa).

Residues 102 to 388 (TFLFQALGKG…ARGALSHPFL (287 aa)) form the Protein kinase domain. ATP contacts are provided by residues 108-116 (LGKGAYGNV) and Lys131. Asp233 serves as the catalytic Proton acceptor. Residues Asn238 and Asp251 each coordinate Mg(2+).

It belongs to the protein kinase superfamily. CMGC Ser/Thr protein kinase family. CDC2/CDKX subfamily. Interacts with cyd-1; the interaction is likely involved in regulating cdk-4 activity. The cofactor is Mg(2+).

The catalysed reaction is L-seryl-[protein] + ATP = O-phospho-L-seryl-[protein] + ADP + H(+). It catalyses the reaction L-threonyl-[protein] + ATP = O-phospho-L-threonyl-[protein] + ADP + H(+). Serine/threonine-protein kinase which, in association with cyclin D-like protein cyd-1, is required for the progression through the G1 phase of the cell cycle during postembryonic development by phosphorylating and inhibiting lin-35 and fzr-1. In complex with cyd-1, involved in sex determination during gonadogenesis by regulating the asymmetric division of the somatic gonadal precursor cell (SGP). This Caenorhabditis elegans protein is Cyclin-dependent kinase 4 homolog.